Here is a 187-residue protein sequence, read N- to C-terminus: uncharacterized protein (187 aa).

Residues 1–95 (MTTMKRSADP…GSTRPSARYG (95 aa)) form a disordered region. Residues 46–80 (RARRSRGPKRFLGKRNYRRARARKPGKRDRAHSSK) show a composition bias toward basic residues.

It localises to the mitochondrion. This is an uncharacterized protein from Arabidopsis thaliana (Mouse-ear cress).